The sequence spans 1943 residues: Beta-L-arabinobiosidase (1943 aa).

A signal peptide (tat-type signal) is located at residues 1–32 (MHHSTRKRWLASIGAVAAVATLATGGAVTAQA). 2 F5/8 type C domains span residues 892 to 1049 (TNVD…AYNT) and 1142 to 1302 (SKEI…AYAI). The region spanning 1061-1157 (TPQVDAYVSS…HGIPSDGTVN (97 aa)) is the PKD domain. 3 consecutive FIVAR domains span residues 1678–1716 (ANGL…EQVA), 1746–1790 (DAAK…AAVQ), and 1823–1864 (QAKK…VDAA). The tract at residues 1875-1906 (TKVEQKPGSQQPGVTDTDKDDKDNKGDRVPPT) is disordered. Positions 1890–1902 (DTDKDDKDNKGDR) are enriched in basic and acidic residues. Residues 1908-1928 (AAVSVVAAAAVLLTAAGVTIL) traverse the membrane as a helical segment.

This sequence belongs to the glycosyl hydrolase 121 family. In terms of processing, predicted to be exported by the Tat system. The position of the signal peptide cleavage has not been experimentally proven.

It is found in the membrane. It carries out the reaction 4-O-(beta-L-arabinofuranosyl-(1-&gt;2)-beta-L-arabinofuranosyl-(1-&gt;2)-beta-L-arabinofuranosyl)-(2S,4S)-4-hydroxyproline + H2O = 4-O-(beta-L-arabinofuranosyl)-(2S,4S)-4-hydroxyproline + beta-L-arabinofuranosyl-(1-&gt;2)-beta-L-arabinofuranose. Functionally, beta-L-arabinobiosidase that removes L-arabinofuranose-beta-1,2-L-arabinofuranose disaccharide from various substrates such as carrot extensin and potato lectin. Also acts on L-arabinofuranose (Ara)-beta-1,2-Ara-beta-1,2-Ara-beta-Hyp (Ara(3)-Hyp) but not on Ara-beta-1,3-Ara-beta-1,2-Ara-beta-1,2-Ara-beta--Hyp (Ara(4)-Hyp) or Ara-beta-1,2-Ara-beta-Hyp (Ara(2)-Hyp), suggesting a specificity for unmodified Ara(3)-Hyp substrate. In the presence of 1-alkanols, shows transglycosylation activity, retaining the anomeric configuration of the arabinofuranose residue. This is Beta-L-arabinobiosidase (hypBA2) from Bifidobacterium longum subsp. longum (strain ATCC 15707 / DSM 20219 / JCM 1217 / NCTC 11818 / E194b).